A 230-amino-acid polypeptide reads, in one-letter code: MRFQTTLVPARLIRRYKRFLADCQLEDGREVTAHCANPGSMMGLADPGTKIWLEPNDDPKKKLKFGWRLVDHENGHFTGVDTSVPNRALKTALERRAIPSLAAYETVRPEVKYGQNSRIDFLLSGPGLADAYVEVKSVTLCREPGLAEFPDSVTARGAKHLAELAAMAGLGHRAIMLYLVQRTDCDRFTLAADIDPAYARAFETARAQGVEKLILTTHISPQGVEIADML.

This sequence belongs to the SfsA family.

This is Sugar fermentation stimulation protein homolog from Ruegeria pomeroyi (strain ATCC 700808 / DSM 15171 / DSS-3) (Silicibacter pomeroyi).